The following is a 504-amino-acid chain: Zinc finger CCCH-type with G patch domain-containing protein (504 aa).

Positions 95 to 121 (LSEDSNEVKPNPDTDEENEEEEQDISG) are disordered. Residues 107–118 (DTDEENEEEEQD) are compositionally biased toward acidic residues. Residues 165–191 (KSMKPCGFYLEGKCRFMDNCRYSHGEV) form a C3H1-type zinc finger. Positions 308–354 (TRGIGSKLLMKMGYELGKGLGKTLSGRVEPVQAVVLPKGHSLDICAE) constitute a G-patch domain.

Its subcellular location is the nucleus. Transcription repressor that specifically binds the 5'-GGAG[GA]A[GA]A-3' consensus sequence. Represses transcription by recruiting the chromatin multiprotein complex NuRD to target promoters. Negatively regulates expression of EGFR, a gene involved in cell proliferation, survival and migration. The sequence is that of Zinc finger CCCH-type with G patch domain-containing protein (zgpat) from Danio rerio (Zebrafish).